The chain runs to 344 residues: S-methyl-5'-thioadenosine phosphorylase (344 aa).

Phosphate-binding positions include T45, 88–89, and 121–122; these read RH and SA. Substrate is bound at residue M238. S239 provides a ligand contact to phosphate. 262 to 264 serves as a coordination point for substrate; the sequence is DYD.

It belongs to the PNP/MTAP phosphorylase family. MTAP subfamily. As to quaternary structure, homotrimer.

It localises to the cytoplasm. The protein localises to the nucleus. It catalyses the reaction S-methyl-5'-thioadenosine + phosphate = 5-(methylsulfanyl)-alpha-D-ribose 1-phosphate + adenine. The protein operates within amino-acid biosynthesis; L-methionine biosynthesis via salvage pathway; S-methyl-5-thio-alpha-D-ribose 1-phosphate from S-methyl-5'-thioadenosine (phosphorylase route): step 1/1. Functionally, catalyzes the reversible phosphorylation of S-methyl-5'-thioadenosine (MTA) to adenine and 5-methylthioribose-1-phosphate. Involved in the breakdown of MTA, a major by-product of polyamine biosynthesis. Responsible for the first step in the methionine salvage pathway after MTA has been generated from S-adenosylmethionine. Has broad substrate specificity with 6-aminopurine nucleosides as preferred substrates. In Candida albicans (strain WO-1) (Yeast), this protein is S-methyl-5'-thioadenosine phosphorylase.